The chain runs to 87 residues: Probable acyl carrier protein PigG (87 aa).

The Carrier domain maps to 1–78 (MLESKLINHI…SMVALVQRLK (78 aa)). At Ser36 the chain carries O-(pantetheine 4'-phosphoryl)serine.

The protein operates within antibiotic biosynthesis; prodigiosin biosynthesis. Involved in the biosynthesis of 4-methoxy-2,2'-bipyrrole-5-carbaldehyde (MBC), one of the terminal products involved in the biosynthesis of the red antibiotic prodigiosin (Pig). Carrier of the L-prolyl group transferred from L-prolyl-AMP by PigI. The chain is Probable acyl carrier protein PigG from Serratia sp. (strain ATCC 39006) (Prodigiosinella confusarubida).